The sequence spans 1504 residues: DNA-directed RNA polymerase subunit beta' (1504 aa).

Zn(2+) is bound by residues cysteine 60, cysteine 62, cysteine 75, and cysteine 78. Positions 265–294 (RKQRDLEDAEQLTGAERERKEYEASQERER) are disordered. Residues 279-294 (AERERKEYEASQERER) are compositionally biased toward basic and acidic residues. The Mg(2+) site is built by aspartate 626, aspartate 628, and aspartate 630. The Zn(2+) site is built by cysteine 1002, cysteine 1075, cysteine 1082, and cysteine 1085. Positions 1468-1504 (RALIGGDGDDGERNNGDFDDQVGEDVVIPPDDDDQEA) are disordered.

It belongs to the RNA polymerase beta' chain family. As to quaternary structure, the RNAP catalytic core consists of 2 alpha, 1 beta, 1 beta' and 1 omega subunit. When a sigma factor is associated with the core the holoenzyme is formed, which can initiate transcription. The cofactor is Mg(2+). Requires Zn(2+) as cofactor.

It catalyses the reaction RNA(n) + a ribonucleoside 5'-triphosphate = RNA(n+1) + diphosphate. Its function is as follows. DNA-dependent RNA polymerase catalyzes the transcription of DNA into RNA using the four ribonucleoside triphosphates as substrates. The chain is DNA-directed RNA polymerase subunit beta' from Roseiflexus sp. (strain RS-1).